Here is a 499-residue protein sequence, read N- to C-terminus: Bifunctional purine biosynthesis protein PurH (499 aa).

An MGS-like domain is found at 1 to 144 (MIKRALISVF…KNFKDVVVLT (144 aa)).

This sequence belongs to the PurH family.

The catalysed reaction is (6R)-10-formyltetrahydrofolate + 5-amino-1-(5-phospho-beta-D-ribosyl)imidazole-4-carboxamide = 5-formamido-1-(5-phospho-D-ribosyl)imidazole-4-carboxamide + (6S)-5,6,7,8-tetrahydrofolate. It catalyses the reaction IMP + H2O = 5-formamido-1-(5-phospho-D-ribosyl)imidazole-4-carboxamide. It functions in the pathway purine metabolism; IMP biosynthesis via de novo pathway; 5-formamido-1-(5-phospho-D-ribosyl)imidazole-4-carboxamide from 5-amino-1-(5-phospho-D-ribosyl)imidazole-4-carboxamide (10-formyl THF route): step 1/1. The protein operates within purine metabolism; IMP biosynthesis via de novo pathway; IMP from 5-formamido-1-(5-phospho-D-ribosyl)imidazole-4-carboxamide: step 1/1. This Clostridium botulinum (strain Langeland / NCTC 10281 / Type F) protein is Bifunctional purine biosynthesis protein PurH.